The primary structure comprises 318 residues: uncharacterized protein (318 aa).

Helical transmembrane passes span 112-132, 147-167, 209-229, and 237-257; these read VIGV…PVFL, IAIE…FLSM, CGSS…LLVP, and VIDR…VLQL.

It is found in the cell membrane. This is an uncharacterized protein from Bacillus subtilis (strain 168).